We begin with the raw amino-acid sequence, 645 residues long: Protein hrpC2 (645 aa).

The next 7 helical transmembrane spans lie at 18–34, 43–59, 108–124, 201–217, 243–259, 285–301, and 308–324; these read VAIA…MILP, LLGI…MVTM, LVVG…FLII, IAGL…GIVV, VSQI…GVMI, ARAL…FAFV, and LFLL…YTIW. Residues 334–354 form a disordered region; the sequence is DQRKLPSASRKGAKGEAPHIR.

Belongs to the FHIPEP (flagella/HR/invasion proteins export pore) family.

It is found in the cell inner membrane. Involved in the secretion of a proteinaceous elicitor of the hypersensitivity response in plants. The chain is Protein hrpC2 (hrpC2) from Xanthomonas euvesicatoria.